Reading from the N-terminus, the 177-residue chain is Immunity protein CdiI-YPIII (177 aa).

In terms of assembly, interacts with the C-terminal DNase fragment (residues 954-1077) of cognate toxin CdiA-YPIII.

In terms of biological role, immunity protein component of a toxin-immunity protein module, which functions as a cellular contact-dependent growth inhibition (CDI) system. CDI modules allow bacteria to communicate with and inhibit the growth of closely related neighboring bacteria in a contact-dependent fashion. Neutralizes the toxic activity of cognate toxin CdiA-YPIII (residues 954-1077). Does not inhibit toxic activity of CdiA from other toxin-immunity modules. The chain is Immunity protein CdiI-YPIII from Yersinia pseudotuberculosis serotype O:3 (strain YPIII).